The primary structure comprises 1255 residues: Cilia- and flagella-associated protein 337 B (1255 aa).

An EF-hand domain is found at 87–122 (KLVRCLTNLFEEIDLNGNGILEWDEFTNYVIEKATV). Residues Asp100, Asn102, Asn104, and Glu111 each coordinate Ca(2+). WD repeat units follow at residues 228 to 269 (DLKT…WVLA), 282 to 322 (EFKN…KELE), 326 to 365 (AHTE…KKRV), 368 to 407 (EHTR…LIYK), 410 to 449 (GHSS…NVQC), 496 to 536 (VDDY…KIFS), 538 to 577 (VTQG…MIKA), 580 to 624 (KHSA…RTLE), 625 to 664 (LKDV…QNGS), 669 to 708 (TQYE…FKFQ), 769 to 808 (QQNL…TILE), and 844 to 883 (AHYE…LIDQ). 2 disordered regions span residues 941–988 (IKSL…NFNP) and 1140–1160 (QQQV…QQPG). Over residues 953–969 (TQESSTQEQEAAQQPQQ) the composition is skewed to low complexity. Residues 1148–1160 (TEPSSNRSHQQPG) are compositionally biased toward polar residues.

It belongs to the CFAP337 family. Associates with components of the nexin-dynein regulatory complex (N-DRC) and the CFAP184:CFAP263 complex.

It localises to the cell projection. Its subcellular location is the cilium. Its function is as follows. Associates with components of the nexin-dynein regulatory complex (N-DRC), a key regulator of ciliary/flagellar motility, and might act as an inner dynein arm (IDA) hub or linkage. The sequence is that of Cilia- and flagella-associated protein 337 B from Tetrahymena thermophila (strain SB210).